The chain runs to 142 residues: Hemoglobin subunit alpha-A (142 aa).

One can recognise a Globin domain in the interval V2 to R142. H59 lines the O2 pocket. H88 is a heme b binding site.

This sequence belongs to the globin family. As to quaternary structure, heterotetramer of two alpha chains and two beta chains. Red blood cells.

Functionally, involved in oxygen transport from the lung to the various peripheral tissues. This is Hemoglobin subunit alpha-A (HBAA) from Anser anser anser (Western greylag goose).